Consider the following 179-residue polypeptide: Fimbrial subunit ElfA (179 aa).

Positions 1–21 (MKKSVLTAFITVVCATSSVMA) are cleaved as a signal peptide.

The protein belongs to the fimbrial protein family.

It localises to the fimbrium. Functionally, part of the elfADCG-ycbUVF fimbrial operon, which promotes adhesion of bacteria to different abiotic surfaces. ElfA is the major fimbrial subunit produced by this operon. The chain is Fimbrial subunit ElfA (elfA) from Escherichia coli (strain K12).